Reading from the N-terminus, the 573-residue chain is MAISAAQNPLYIGFDLSTQQLKGLVVNSDLKVVYLSKFDFDADSRGFPIKKGVITNEAEHEVYAPVAMWLQALDTVLDGLRQQGLDFSRVKGISGAGQQHGSVYWGDRAEDLLQNLDPSKSLEAQLSDAFSHPYSPNWQDASTQKECDEFDAYLGSQEALAQATGSKAHHRFTGPQILRFQRKYPDVYRHTQRISLVSSFLASLFLGRFAPFDISDVCGMNLWNIKQGAYDEKLLKLCAGSFGVDDLKRKLGPVYEDGGLNLGSIHRYYVDRYGFNPDCTIIPATGDNPATILALPLRPSDAMVSLGTSTTFLMSTPSYQPHPATHFFNHPTTAGLYMFMLCYKNGGLAREQIRDAVNDKLGSSDDVWANFDRTALQTPPLGQKADSDPMKMGLFFPRPEIVPNLRSGQWRFDYNPADGSLHETTAGWDQPLDEARAIIESQMLSLRLRSRGLTSSPGDGKPPQPRRVYLVGGGSKNKAIAKIAGEILGGSEGVYKLEIGDNACALGAAYKAVWALERSNGQTFEDLIGQRWKEEDFIEKIADGYQPGVFEKYGQAVEGFEKMELQVLQQEKK.

The substrate site is built by histidine 100, arginine 171, aspartate 287, and asparagine 288. ATP-binding positions include tryptophan 368, 473–474 (GG), and asparagine 477.

This sequence belongs to the FGGY kinase family.

It localises to the cytoplasm. It carries out the reaction D-xylulose + ATP = D-xylulose 5-phosphate + ADP + H(+). Highly specific D-xylulose kinase which participates in the catabolism of xylose. Xylose is a major component of hemicelluloses such as xylan. Most fungi utilize D-xylose via three enzymatic reactions, xylose reductase (XR), xylitol dehydrogenase (XDH), and xylulokinase, to form xylulose 5-phosphate, which enters pentose phosphate pathway. In Aspergillus terreus (strain NIH 2624 / FGSC A1156), this protein is Probable D-xylulose kinase A (xkiA).